A 30-amino-acid polypeptide reads, in one-letter code: Cyclotide hyen-H (30 aa).

The segment at residues 1-30 (KIPCGESCVYIPCISSVLGCSCSNKVCYKD) is a cross-link (cyclopeptide (Lys-Asp)). 3 disulfide bridges follow: cysteine 4-cysteine 20, cysteine 8-cysteine 22, and cysteine 13-cysteine 27.

This is a cyclic peptide. In terms of tissue distribution, detected in stems (at protein level).

Functionally, probably participates in a plant defense mechanism. In Pigea enneasperma (Spade flower), this protein is Cyclotide hyen-H.